A 65-amino-acid chain; its full sequence is Protein translocase subunit SecE (65 aa).

The chain crosses the membrane as a helical span at residues 44–64 (LVMAVVGLIAYIVQLTTSLII).

This sequence belongs to the SecE/SEC61-gamma family. In terms of assembly, component of the Sec protein translocase complex. Heterotrimer consisting of SecY (alpha), SecG (beta) and SecE (gamma) subunits. The heterotrimers can form oligomers, although 1 heterotrimer is thought to be able to translocate proteins. Interacts with the ribosome. May interact with SecDF, and other proteins may be involved.

The protein localises to the cell membrane. Essential subunit of the Sec protein translocation channel SecYEG. Clamps together the 2 halves of SecY. May contact the channel plug during translocation. The polypeptide is Protein translocase subunit SecE (Sulfolobus acidocaldarius (strain ATCC 33909 / DSM 639 / JCM 8929 / NBRC 15157 / NCIMB 11770)).